The chain runs to 876 residues: GRB2-associated and regulator of MAPK protein 1 (876 aa).

A CABIT region spans residues 12 to 320 (KDVKWSSVAV…HLVKGESWPE (309 aa)). 2 positions are modified to phosphotyrosine: Tyr-105 and Tyr-453. Residues 496–572 (IPGTLGAAVK…SPSPTLSYYS (77 aa)) are disordered. The segment at 498–550 (GTLGAAVKSSDTALPPPPVPPKSEAVREECRLLNAPPVPPRSAKPLSTSPSIP) is necessary for interaction with GRB2. The segment covering 558–572 (RQQTRSPSPTLSYYS) has biased composition (polar residues). A phosphoserine mark is found at Ser-610 and Ser-614. 2 disordered regions span residues 626 to 664 (WPNH…PKRN) and 738 to 763 (ASET…PDLS). 2 stretches are compositionally biased toward polar residues: residues 631–640 (SGASESQTRS) and 648–658 (RSYSYPRQKTP). Positions 811–876 (LSIEEVSKSL…QFINGWRPKI (66 aa)) constitute an SAM domain.

Belongs to the GAREM family. In terms of assembly, isoform 1 interacts with EGFR. Isoform 1 interacts (via proline-rich domain and phosphorylated at Tyr-105 and Tyr-453) with GRB2 (via SH3 domains); the interaction occurs upon EGF stimulation. Isoform 1 interacts (phosphorylated at Tyr-453) with PTPN11; the interaction increases MAPK/ERK activity and does not affect the GRB2/SOS complex formation. Isoform 2 does not interact with GRB2. In terms of processing, on EGF stimulation, phosphorylated on Tyr-105 and Tyr-453. In terms of tissue distribution, isoform 1 is ubiquitously expressed.

Functionally, acts as an adapter protein that plays a role in intracellular signaling cascades triggered either by the cell surface activated epidermal growth factor receptor and/or cytoplasmic protein tyrosine kinases. Promotes activation of the MAPK/ERK signaling pathway. Plays a role in the regulation of cell proliferation. This Homo sapiens (Human) protein is GRB2-associated and regulator of MAPK protein 1 (GAREM1).